A 104-amino-acid polypeptide reads, in one-letter code: MKFFVLFAILIAIVHASCASVPKVVYDGPIYELRQIEEENIEPDTELMDSNEPLLPLRHRRVTCDVLSWQSKWLSINHSACAIRCLAQRRKGGSCRNGVCICRK.

The N-terminal stretch at M1 to A19 is a signal peptide. 3 cysteine pairs are disulfide-bonded: C64/C95, C81/C100, and C85/C102.

Belongs to the invertebrate defensin family. Type 1 subfamily. As to expression, low expression in head and thorax.

The protein resides in the secreted. Functionally, antibacterial peptide mostly active against Gram-positive bacteria. In Apis mellifera (Honeybee), this protein is Defensin-2.